A 319-amino-acid polypeptide reads, in one-letter code: ATP-dependent 6-phosphofructokinase (319 aa).

Glycine 11 is an ATP binding site. Residue 21 to 25 participates in ADP binding; sequence RAVVR. ATP-binding positions include 72-73 and 102-105; these read RY and GDGS. A Mg(2+)-binding site is contributed by aspartate 103. Residue 125–127 coordinates substrate; that stretch reads TID. Aspartate 127 serves as the catalytic Proton acceptor. Arginine 154 serves as a coordination point for ADP. Substrate contacts are provided by residues arginine 162 and 169 to 171; that span reads MGR. ADP is bound by residues 185 to 187, arginine 211, and 213 to 215; these read GAE and KKH. Substrate-binding positions include glutamate 222, arginine 243, and 249–252; that span reads HVQR.

Belongs to the phosphofructokinase type A (PFKA) family. ATP-dependent PFK group I subfamily. Prokaryotic clade 'B1' sub-subfamily. Homotetramer. Requires Mg(2+) as cofactor.

The protein resides in the cytoplasm. It catalyses the reaction beta-D-fructose 6-phosphate + ATP = beta-D-fructose 1,6-bisphosphate + ADP + H(+). Its pathway is carbohydrate degradation; glycolysis; D-glyceraldehyde 3-phosphate and glycerone phosphate from D-glucose: step 3/4. Allosterically activated by ADP and other diphosphonucleosides, and allosterically inhibited by phosphoenolpyruvate. Its function is as follows. Catalyzes the phosphorylation of D-fructose 6-phosphate to fructose 1,6-bisphosphate by ATP, the first committing step of glycolysis. In Listeria monocytogenes serotype 4a (strain HCC23), this protein is ATP-dependent 6-phosphofructokinase.